Consider the following 441-residue polypeptide: Amino-acid acetyltransferase (441 aa).

Residues 295 to 434 form the N-acetyltransferase domain; sequence EQIRRANIND…QALYNYQRRS (140 aa).

This sequence belongs to the acetyltransferase family. ArgA subfamily. Homohexamer.

It is found in the cytoplasm. It catalyses the reaction L-glutamate + acetyl-CoA = N-acetyl-L-glutamate + CoA + H(+). It participates in amino-acid biosynthesis; L-arginine biosynthesis; N(2)-acetyl-L-ornithine from L-glutamate: step 1/4. This Edwardsiella ictaluri (strain 93-146) protein is Amino-acid acetyltransferase.